Here is a 440-residue protein sequence, read N- to C-terminus: WAS/WASL-interacting protein family member 2 (440 aa).

The segment covering 1–18 has biased composition (pro residues); that stretch reads MPIPPPPPPPPGPPPPPT. Residues 1-38 form a disordered region; sequence MPIPPPPPPPPGPPPPPTFNQANTEQPKLSRDEQRNRG. Residues 36-53 form the WH2 domain; sequence NRGALLQDICKGTKLKKV. The residue at position 37 (R37) is an Asymmetric dimethylarginine. The binds actin stretch occupies residues 49–52; the sequence is KLKK. 2 disordered regions span residues 56 to 386 and 419 to 440; these read VNDR…RDSI and RVYP…PILR. Low complexity predominate over residues 116-132; the sequence is PSSRAAAPRPPGSAASG. Composition is skewed to pro residues over residues 176-193, 225-236, 249-262, and 356-378; these read APPP…PTPL, PAPPPVKPPPSP, APPP…PGVP, and RGKP…PPPL.

Belongs to the verprolin family. In terms of assembly, interacts with WASL and WASP, and this interaction results in cytoplasmic relocation of these two proteins along actin filaments. Interacts with NCK2 resulting in the localization to sites of focal adhesions.

It is found in the cytoplasm. It localises to the cytoskeleton. Plays an active role in the formation of cell surface protrusions downstream of activated PDGFB receptors. Plays an important role in actin-microspike formation through cooperation with WASL. May cooperate with WASP and WASL to induce mobilization and reorganization of the actin filament system. The polypeptide is WAS/WASL-interacting protein family member 2 (Wipf2) (Mus musculus (Mouse)).